The primary structure comprises 137 residues: Nucleoside diphosphate kinase (137 aa).

ATP contacts are provided by lysine 9, phenylalanine 57, arginine 85, threonine 91, arginine 102, and asparagine 112. The Pros-phosphohistidine intermediate role is filled by histidine 115.

The protein belongs to the NDK family. In terms of assembly, homotetramer. It depends on Mg(2+) as a cofactor.

It is found in the cytoplasm. The enzyme catalyses a 2'-deoxyribonucleoside 5'-diphosphate + ATP = a 2'-deoxyribonucleoside 5'-triphosphate + ADP. It catalyses the reaction a ribonucleoside 5'-diphosphate + ATP = a ribonucleoside 5'-triphosphate + ADP. Its function is as follows. Major role in the synthesis of nucleoside triphosphates other than ATP. The ATP gamma phosphate is transferred to the NDP beta phosphate via a ping-pong mechanism, using a phosphorylated active-site intermediate. The chain is Nucleoside diphosphate kinase from Leptospira interrogans serogroup Icterohaemorrhagiae serovar Lai (strain 56601).